The sequence spans 207 residues: Ribosomal RNA small subunit methyltransferase G (207 aa).

S-adenosyl-L-methionine contacts are provided by residues Gly-76, Gln-81, 127–128, and Arg-141; that span reads VE.

This sequence belongs to the methyltransferase superfamily. RNA methyltransferase RsmG family.

It localises to the cytoplasm. It carries out the reaction guanosine(527) in 16S rRNA + S-adenosyl-L-methionine = N(7)-methylguanosine(527) in 16S rRNA + S-adenosyl-L-homocysteine. Its function is as follows. Specifically methylates the N7 position of guanine in position 527 of 16S rRNA. The sequence is that of Ribosomal RNA small subunit methyltransferase G from Neisseria meningitidis serogroup C / serotype 2a (strain ATCC 700532 / DSM 15464 / FAM18).